The chain runs to 166 residues: MAKTLSKPASGALAPWLGISLIVILFDQLSKIAILKTFAYGAQHALTSFFNLVLVYNRGAAFGFLSTASGWQRWAFTALGVGATLVICFLLKRHGHQRLFSLSLALILGGALGNVIDRLVYGHVIDFLDFHLGGWHFPAFNLADSAITIGAVLLIYDELRRVRGAR.

A run of 4 helical transmembrane segments spans residues 9 to 29 (ASGA…FDQL), 45 to 65 (ALTS…FGFL), 71 to 91 (WQRW…CFLL), and 100 to 120 (FSLS…DRLV). Residues D126 and D144 contribute to the active site. A helical transmembrane segment spans residues 135-155 (WHFPAFNLADSAITIGAVLLI).

Belongs to the peptidase A8 family.

The protein resides in the cell inner membrane. The enzyme catalyses Release of signal peptides from bacterial membrane prolipoproteins. Hydrolyzes -Xaa-Yaa-Zaa-|-(S,diacylglyceryl)Cys-, in which Xaa is hydrophobic (preferably Leu), and Yaa (Ala or Ser) and Zaa (Gly or Ala) have small, neutral side chains.. The protein operates within protein modification; lipoprotein biosynthesis (signal peptide cleavage). Functionally, this protein specifically catalyzes the removal of signal peptides from prolipoproteins. The sequence is that of Lipoprotein signal peptidase from Burkholderia multivorans (strain ATCC 17616 / 249).